A 273-amino-acid chain; its full sequence is Dermonecrotic toxin LruSicTox-alphaIC1b (273 aa).

H5 is a catalytic residue. Residues E25 and D27 each contribute to the Mg(2+) site. H41 (nucleophile) is an active-site residue. 2 disulfides stabilise this stretch: C45/C51 and C47/C190. Residue D85 participates in Mg(2+) binding.

This sequence belongs to the arthropod phospholipase D family. Class II subfamily. It depends on Mg(2+) as a cofactor. As to expression, expressed by the venom gland.

The protein localises to the secreted. It carries out the reaction an N-(acyl)-sphingosylphosphocholine = an N-(acyl)-sphingosyl-1,3-cyclic phosphate + choline. The catalysed reaction is an N-(acyl)-sphingosylphosphoethanolamine = an N-(acyl)-sphingosyl-1,3-cyclic phosphate + ethanolamine. The enzyme catalyses a 1-acyl-sn-glycero-3-phosphocholine = a 1-acyl-sn-glycero-2,3-cyclic phosphate + choline. It catalyses the reaction a 1-acyl-sn-glycero-3-phosphoethanolamine = a 1-acyl-sn-glycero-2,3-cyclic phosphate + ethanolamine. Functionally, dermonecrotic toxins cleave the phosphodiester linkage between the phosphate and headgroup of certain phospholipids (sphingolipid and lysolipid substrates), forming an alcohol (often choline) and a cyclic phosphate. This toxin acts on sphingomyelin (SM). It may also act on ceramide phosphoethanolamine (CPE), lysophosphatidylcholine (LPC) and lysophosphatidylethanolamine (LPE), but not on lysophosphatidylserine (LPS), and lysophosphatidylglycerol (LPG). It acts by transphosphatidylation, releasing exclusively cyclic phosphate products as second products. Induces dermonecrosis, hemolysis, increased vascular permeability, edema, inflammatory response, and platelet aggregation. This chain is Dermonecrotic toxin LruSicTox-alphaIC1b, found in Loxosceles rufescens (Mediterranean recluse spider).